Here is a 140-residue protein sequence, read N- to C-terminus: Hemoglobin subunit beta (140 aa).

The region spanning 1–140 is the Globin domain; that stretch reads GSDLVSGFWG…VGDALAKAYH (140 aa). Residues His57 and His86 each coordinate heme b.

The protein belongs to the globin family. Heterotetramer of two alpha chains and two beta chains. In terms of tissue distribution, red blood cells.

Functionally, involved in oxygen transport from the lung to the various peripheral tissues. In Pelophylax lessonae (Pool frog), this protein is Hemoglobin subunit beta (HBB).